We begin with the raw amino-acid sequence, 514 residues long: Pentatricopeptide repeat-containing protein At4g26800 (514 aa).

PPR repeat units follow at residues 122 to 156, 157 to 191, 192 to 226, 227 to 261, 262 to 296, 297 to 331, 332 to 366, 367 to 401, 402 to 436, 437 to 471, and 472 to 510; these read DLYT…GIEP, DIVT…GIKR, DVVV…GISP, NVVT…KINP, NVIT…SIDP, NVFT…GCTP, NVVT…GVAA, NTVS…GLIP, NIRS…RNDL, DIIT…RVEP, and DFKA…ESAP.

It belongs to the PPR family. P subfamily.

This is Pentatricopeptide repeat-containing protein At4g26800 from Arabidopsis thaliana (Mouse-ear cress).